The sequence spans 604 residues: Aspartate--tRNA(Asp/Asn) ligase (604 aa).

Glu175 serves as a coordination point for L-aspartate. The interval Gln199 to Lys202 is aspartate. L-aspartate contacts are provided by Arg221 and His456. ATP is bound at residue Arg221–Glu223. Position 496 (Glu496) interacts with ATP. Arg503 is a binding site for L-aspartate. Gly548 to Arg551 lines the ATP pocket.

Belongs to the class-II aminoacyl-tRNA synthetase family. Type 1 subfamily. Homodimer.

The protein localises to the cytoplasm. The catalysed reaction is tRNA(Asx) + L-aspartate + ATP = L-aspartyl-tRNA(Asx) + AMP + diphosphate. Its function is as follows. Aspartyl-tRNA synthetase with relaxed tRNA specificity since it is able to aspartylate not only its cognate tRNA(Asp) but also tRNA(Asn). Reaction proceeds in two steps: L-aspartate is first activated by ATP to form Asp-AMP and then transferred to the acceptor end of tRNA(Asp/Asn). In Methylorubrum populi (strain ATCC BAA-705 / NCIMB 13946 / BJ001) (Methylobacterium populi), this protein is Aspartate--tRNA(Asp/Asn) ligase.